The primary structure comprises 432 residues: Zinc finger protein 829 (432 aa).

The KRAB domain occupies 35 to 106 (VMFRDVSIDF…DRELTRGLCS (72 aa)). A C2H2-type 1 zinc finger spans residues 156–178 (WECKICGKTFNQNSQFIQHQRIH). The C2H2-type 2; degenerate zinc finger occupies 184–206 (YESKEYGKSFSRGSLVTRHQRIH). C2H2-type zinc fingers lie at residues 212-234 (YECKECGKAFSCSSYFSQHQRIH), 240-262 (YECKECGKAFKYCSNLNDHQRIH), 268-290 (YECKVCGKAFTKSSQLFLHLRIH), 296-318 (YECKECGKAFTQHSRLIQHQRMH), 324-346 (YECKQCGKAFNSASTLTNHHRIH), 352-374 (YECEECRKAFIQSSELIQHQRIH), 380-402 (YECNECGKAFNKGSNLTRHQRIH), and 408-430 (YDCKECGKAFGSRSDLIRHEGIH).

This sequence belongs to the krueppel C2H2-type zinc-finger protein family.

It is found in the nucleus. In terms of biological role, may be involved in transcriptional regulation. In Homo sapiens (Human), this protein is Zinc finger protein 829 (ZNF829).